Reading from the N-terminus, the 1057-residue chain is Probable sucrose-phosphate synthase 1 (1057 aa).

The segment covering 103 to 115 has biased composition (basic and acidic residues); it reads RRLERERGRREAT. Disordered stretches follow at residues 103-143, 439-459, and 670-693; these read RRLE…STRS, PQDG…ASPD, and RHPQ…GDSL. A compositionally biased stretch (acidic residues) spans 442–452; the sequence is GDMDGETEGNE.

It belongs to the glycosyltransferase 1 family. As to quaternary structure, homodimer or homotetramer.

The enzyme catalyses beta-D-fructose 6-phosphate + UDP-alpha-D-glucose = sucrose 6(F)-phosphate + UDP + H(+). It participates in glycan biosynthesis; sucrose biosynthesis; sucrose from D-fructose 6-phosphate and UDP-alpha-D-glucose: step 1/2. Its activity is regulated as follows. Activity is regulated by phosphorylation and moderated by concentration of metabolites and light. Functionally, plays a role in photosynthetic sucrose synthesis by catalyzing the rate-limiting step of sucrose biosynthesis from UDP-glucose and fructose- 6-phosphate. Involved in the regulation of carbon partitioning in the leaves of plants. May regulate the synthesis of sucrose and therefore play a major role as a limiting factor in the export of photoassimilates out of the leaf. Plays a role for sucrose availability that is essential for plant growth and fiber elongation. The sequence is that of Probable sucrose-phosphate synthase 1 (SPS1) from Citrus unshiu (Satsuma mandarin).